The following is a 225-amino-acid chain: Large ribosomal subunit protein eL15 (225 aa).

A disordered region spans residues 159–180; it reads RPFRGLTSAGKKMRGLRKSRGL. Basic residues predominate over residues 169–180; that stretch reads KKMRGLRKSRGL.

Belongs to the eukaryotic ribosomal protein eL15 family.

The polypeptide is Large ribosomal subunit protein eL15 (rpl15e) (Aeropyrum pernix (strain ATCC 700893 / DSM 11879 / JCM 9820 / NBRC 100138 / K1)).